A 68-amino-acid polypeptide reads, in one-letter code: Preprofallaxidin-5 (68 aa).

The signal sequence occupies residues 1–22 (MASLKKSLFLVLFLGFVSLSIC). Positions 23–51 (EEEKREDKEDEGENEEAEENHEERSEEKR) are excised as a propeptide. A disordered region spans residues 24-50 (EEKREDKEDEGENEEAEENHEERSEEK). Acidic residues predominate over residues 30 to 42 (KEDEGENEEAEEN). Position 64 is a leucine amide (leucine 64). Serine 68 is a propeptide.

This sequence belongs to the frog skin active peptide (FSAP) family. Brevinin subfamily. In terms of tissue distribution, expressed by the skin glands.

The protein localises to the secreted. The protein is Preprofallaxidin-5 of Litoria fallax (Eastern dwarf tree frog).